A 360-amino-acid polypeptide reads, in one-letter code: UDP-N-acetylglucosamine--N-acetylmuramyl-(pentapeptide) pyrophosphoryl-undecaprenol N-acetylglucosamine transferase (360 aa).

Residues 17 to 19 (TAG), N130, R166, S200, I247, and Q291 contribute to the UDP-N-acetyl-alpha-D-glucosamine site.

It belongs to the glycosyltransferase 28 family. MurG subfamily.

It localises to the cell membrane. The enzyme catalyses di-trans,octa-cis-undecaprenyl diphospho-N-acetyl-alpha-D-muramoyl-L-alanyl-D-glutamyl-meso-2,6-diaminopimeloyl-D-alanyl-D-alanine + UDP-N-acetyl-alpha-D-glucosamine = di-trans,octa-cis-undecaprenyl diphospho-[N-acetyl-alpha-D-glucosaminyl-(1-&gt;4)]-N-acetyl-alpha-D-muramoyl-L-alanyl-D-glutamyl-meso-2,6-diaminopimeloyl-D-alanyl-D-alanine + UDP + H(+). The protein operates within cell wall biogenesis; peptidoglycan biosynthesis. In terms of biological role, cell wall formation. Catalyzes the transfer of a GlcNAc subunit on undecaprenyl-pyrophosphoryl-MurNAc-pentapeptide (lipid intermediate I) to form undecaprenyl-pyrophosphoryl-MurNAc-(pentapeptide)GlcNAc (lipid intermediate II). This Corynebacterium efficiens (strain DSM 44549 / YS-314 / AJ 12310 / JCM 11189 / NBRC 100395) protein is UDP-N-acetylglucosamine--N-acetylmuramyl-(pentapeptide) pyrophosphoryl-undecaprenol N-acetylglucosamine transferase.